We begin with the raw amino-acid sequence, 204 residues long: Phosphopantothenoylcysteine decarboxylase (204 aa).

Residues Thr53 and 104–107 contribute to the FMN site; that span reads DANT. Asn140 lines the substrate pocket. Cys173 functions as the Proton donor in the catalytic mechanism.

It belongs to the HFCD (homooligomeric flavin containing Cys decarboxylase) superfamily. Homotrimer. FMN is required as a cofactor.

The enzyme catalyses N-[(R)-4-phosphopantothenoyl]-L-cysteine + H(+) = (R)-4'-phosphopantetheine + CO2. It participates in cofactor biosynthesis; coenzyme A biosynthesis; CoA from (R)-pantothenate: step 3/5. In terms of biological role, catalyzes the decarboxylation of the cysteine moiety of 4-phosphopantothenoylcysteine to form 4'-phosphopantotheine and this reaction forms part of the biosynthesis of coenzyme A. This chain is Phosphopantothenoylcysteine decarboxylase (Ppcdc), found in Mus musculus (Mouse).